Here is a 650-residue protein sequence, read N- to C-terminus: GATA zinc finger domain-containing protein 11 (650 aa).

The segment covering 16 to 79 (LYNNTNTNSN…NSSNSLSSSF (64 aa)) has biased composition (low complexity). 4 disordered regions span residues 16–96 (LYNN…SGYN), 111–181 (KRSN…TTPL), 221–335 (NNSN…NNNK), and 409–515 (RIFG…NKRK). Polar residues predominate over residues 116–129 (LDDNMSVPTLQNFT). 2 stretches are compositionally biased toward low complexity: residues 130–180 (NNNN…PTTP) and 221–260 (NNSN…NNNN). Positions 261–272 (QSIVPQSIHLQS) are enriched in polar residues. The segment covering 273–334 (TTPQIQPLSL…NNSYNTNNNN (62 aa)) has biased composition (low complexity). Basic residues predominate over residues 425–434 (RPRRFRKSKV). Residues 442 to 511 (HNNNNNNINN…GNGNTNSTNN (70 aa)) are compositionally biased toward low complexity. A GATA-type zinc finger spans residues 522-547 (CTSCGTTSSPEWRKGPAGNQSLCNAC). Residues 619 to 650 (QQQQQQQQQQQNHHHQQLQQQQQQQQQQQLHH) form a disordered region.

In terms of biological role, transcription factor that regulates morphogenetic cell movement during development. The sequence is that of GATA zinc finger domain-containing protein 11 (gtaK) from Dictyostelium discoideum (Social amoeba).